The following is a 441-amino-acid chain: Leucine-rich repeat-containing protein 17 (441 aa).

An N-terminal signal peptide occupies residues 1-18; sequence MRVVTIVILLCFCKAAEL. 3 LRR repeats span residues 82-103, 106-127, and 130-151; these read DLLH…MFSK, KLKS…AFFG, and KLTT…VFIY. The LRRCT 1 domain maps to 163 to 214; that stretch reads NPWHCTCEIETLISMLQIPRNRNLGNYAKCESPQEQKNKKLRQIKSEQLCNE. An LRRNT domain is found at 225 to 268; it reads QVSGRPPVIKPEVDSTFCHNYVFPIQTLDCKRKELKKVPNNIPP. LRR repeat units lie at residues 269–290, 293–314, and 317–340; these read DIVK…EFED, ELKK…AFLG, and HLEE…EDLY. One can recognise an LRRCT 2 domain in the interval 350–402; the sequence is NPWRCDYNIHYLYYWLKHHYNVHFNGLECKTPEEYKGWSVGKYIRSYYEECPK.

In terms of tissue distribution, expressed in osteoblast cell lines. Well expressed in ovary, heart, pancreas, skeletal muscle, lung, and fetal kidney and lung and only at the basal levels in the other tissues examined including adult kidney. More expressed in S-type neuroblastoma cells than in N-type neuroblastoma cells.

It is found in the secreted. Its subcellular location is the extracellular space. Its function is as follows. Involved in bone homeostasis. Acts as a negative regulator of RANKL-induced osteoclast precursor differentiation from bone marrow precursors. The polypeptide is Leucine-rich repeat-containing protein 17 (LRRC17) (Homo sapiens (Human)).